Reading from the N-terminus, the 101-residue chain is Translation initiation factor IF-1, chloroplastic (101 aa).

Over residues 1–10 the composition is skewed to polar residues; the sequence is MNQLKKSFSP. Residues 1-35 are disordered; the sequence is MNQLKKSFSPTEGKKDQNNLINDPQKNKQKKQKKL. The region spanning 26–101 is the S1-like domain; that stretch reads KNKQKKQKKL…TKGRITYRHR (76 aa).

This sequence belongs to the IF-1 family. Component of the 30S ribosomal translation pre-initiation complex which assembles on the 30S ribosome in the order IF-2 and IF-3, IF-1 and N-formylmethionyl-tRNA(fMet); mRNA recruitment can occur at any time during PIC assembly.

The protein localises to the plastid. The protein resides in the chloroplast. Functionally, one of the essential components for the initiation of protein synthesis. Stabilizes the binding of IF-2 and IF-3 on the 30S subunit to which N-formylmethionyl-tRNA(fMet) subsequently binds. Helps modulate mRNA selection, yielding the 30S pre-initiation complex (PIC). Upon addition of the 50S ribosomal subunit IF-1, IF-2 and IF-3 are released leaving the mature 70S translation initiation complex. The chain is Translation initiation factor IF-1, chloroplastic from Tetradesmus obliquus (Green alga).